Consider the following 396-residue polypeptide: S-adenosylmethionine synthase (396 aa).

His14 contacts ATP. Residue Asp16 participates in Mg(2+) binding. Glu42 serves as a coordination point for K(+). The L-methionine site is built by Glu55 and Gln98. Residues 98–108 are flexible loop; sequence QSPDIAMGVDK. Residues 174 to 176, 240 to 241, Asp249, 255 to 256, Ala272, and Lys276 each bind ATP; these read DGK, RF, and RK. Asp249 is an L-methionine binding site. Lys280 serves as a coordination point for L-methionine.

It belongs to the AdoMet synthase family. Homotetramer; dimer of dimers. Requires Mg(2+) as cofactor. K(+) is required as a cofactor.

The protein localises to the cytoplasm. The catalysed reaction is L-methionine + ATP + H2O = S-adenosyl-L-methionine + phosphate + diphosphate. It participates in amino-acid biosynthesis; S-adenosyl-L-methionine biosynthesis; S-adenosyl-L-methionine from L-methionine: step 1/1. Its function is as follows. Catalyzes the formation of S-adenosylmethionine (AdoMet) from methionine and ATP. The overall synthetic reaction is composed of two sequential steps, AdoMet formation and the subsequent tripolyphosphate hydrolysis which occurs prior to release of AdoMet from the enzyme. The sequence is that of S-adenosylmethionine synthase from Caldicellulosiruptor saccharolyticus (strain ATCC 43494 / DSM 8903 / Tp8T 6331).